The primary structure comprises 125 residues: Histone H2A (125 aa).

A compositionally biased stretch (basic residues) spans 1 to 18 (MSGRGKGGKAKAKAKSRS). Residues 1-21 (MSGRGKGGKAKAKAKSRSSRA) form a disordered region. At Ser-2 the chain carries N-acetylserine. N5-methylglutamine is present on Gln-104.

The protein belongs to the histone H2A family. The nucleosome is a histone octamer containing two molecules each of H2A, H2B, H3 and H4 assembled in one H3-H4 heterotetramer and two H2A-H2B heterodimers. The octamer wraps approximately 147 bp of DNA.

It localises to the nucleus. The protein localises to the chromosome. In terms of biological role, core component of nucleosome. Nucleosomes wrap and compact DNA into chromatin, limiting DNA accessibility to the cellular machineries which require DNA as a template. Histones thereby play a central role in transcription regulation, DNA repair, DNA replication and chromosomal stability. DNA accessibility is regulated via a complex set of post-translational modifications of histones, also called histone code, and nucleosome remodeling. In Mytilus trossulus (Blue mussel), this protein is Histone H2A.